The primary structure comprises 124 residues: UPF0738 protein GWCH70_0774 (124 aa).

The protein belongs to the UPF0738 family.

This chain is UPF0738 protein GWCH70_0774, found in Geobacillus sp. (strain WCH70).